A 950-amino-acid chain; its full sequence is ABC transporter A family member 9 (950 aa).

6 helical membrane passes run 31–51 (ATCLHLFSSFFFILLIFSIEE), 223–243 (IISAFYLMGPVFFLAFSMFGF), 276–296 (WLIWEGILTFVSSLFLVLFGM), 308–328 (FVLVFLLFFLFQFNMIGLAFA), 342–362 (VGFLVFLVGFITQIVTTAGFP), and 426–446 (IWLVGTFFFWFVLALYFDNII). The 246-residue stretch at 520 to 765 (VQIHGLAKTY…FGTGFVATVS (246 aa)) folds into the ABC transporter domain. 566 to 573 (GPNGAGKT) serves as a coordination point for ATP.

It belongs to the ABC transporter superfamily. ABCA family. CPR flippase (TC 3.A.1.211) subfamily. As to expression, highly expressed in siliques. Detected in seedlings, rosette leaves, stems and flowers.

It localises to the endoplasmic reticulum membrane. Functionally, mediates the transport of acyl-CoAs and/or free fatty acids to the endoplasmic reticulum. Has no effect on the selectivity of fatty acid incorporation into triacylglycerol or further desaturation steps. This Arabidopsis thaliana (Mouse-ear cress) protein is ABC transporter A family member 9 (ABCA9).